Reading from the N-terminus, the 499-residue chain is L-arabinose isomerase (499 aa).

The Mn(2+) site is built by glutamate 306, glutamate 333, histidine 350, and histidine 449.

The protein belongs to the arabinose isomerase family. Mn(2+) serves as cofactor.

It carries out the reaction beta-L-arabinopyranose = L-ribulose. The protein operates within carbohydrate degradation; L-arabinose degradation via L-ribulose; D-xylulose 5-phosphate from L-arabinose (bacterial route): step 1/3. In terms of biological role, catalyzes the conversion of L-arabinose to L-ribulose. This is L-arabinose isomerase from Tolumonas auensis (strain DSM 9187 / NBRC 110442 / TA 4).